Consider the following 244-residue polypeptide: MELKEYLDYLVEFIKETVKKANAKGVVIGISGGIDSAVVACLAKKAFPNDYTAVWMPIESSDEDYKCKQELIDQCGIKAIDVELKETFLSFKKAIKDSTTPEHKLAIANAKARLRMTTLYTVAQTNSYLVLGTDNLDEWHIGYFTKFGDGGVDMVPLVHLLKREVREAARILGVPTSIINRAPTASLWEDQTDESELGITYDQIDAYLAGEINDENVKSRVDHLHKISEHKRNGAVAPKEFKRK.

An ATP-binding site is contributed by 29-36 (GISGGIDS). Position 35 (Asp-35) interacts with Mg(2+). A deamido-NAD(+)-binding site is contributed by Arg-113. Thr-133 is an ATP binding site. Position 138 (Glu-138) interacts with Mg(2+). 2 residues coordinate deamido-NAD(+): Lys-146 and Asp-153. ATP contacts are provided by Lys-162 and Thr-184. 230 to 231 (HK) serves as a coordination point for deamido-NAD(+).

The protein belongs to the NAD synthetase family. In terms of assembly, homodimer.

The enzyme catalyses deamido-NAD(+) + NH4(+) + ATP = AMP + diphosphate + NAD(+) + H(+). It participates in cofactor biosynthesis; NAD(+) biosynthesis; NAD(+) from deamido-NAD(+) (ammonia route): step 1/1. Functionally, catalyzes the ATP-dependent amidation of deamido-NAD to form NAD. Uses ammonia as a nitrogen source. The chain is NH(3)-dependent NAD(+) synthetase from Mesoplasma florum (strain ATCC 33453 / NBRC 100688 / NCTC 11704 / L1) (Acholeplasma florum).